We begin with the raw amino-acid sequence, 294 residues long: Diaminopimelate epimerase (294 aa).

Residues N11 and N78 each contribute to the substrate site. C87 serves as the catalytic Proton donor. Substrate contacts are provided by residues 88–89, N167, N203, and 221–222; these read GN and ER. Residue C230 is the Proton acceptor of the active site. Position 231-232 (231-232) interacts with substrate; that stretch reads GT.

Belongs to the diaminopimelate epimerase family. As to quaternary structure, homodimer.

Its subcellular location is the cytoplasm. The enzyme catalyses (2S,6S)-2,6-diaminopimelate = meso-2,6-diaminopimelate. It functions in the pathway amino-acid biosynthesis; L-lysine biosynthesis via DAP pathway; DL-2,6-diaminopimelate from LL-2,6-diaminopimelate: step 1/1. Catalyzes the stereoinversion of LL-2,6-diaminopimelate (L,L-DAP) to meso-diaminopimelate (meso-DAP), a precursor of L-lysine and an essential component of the bacterial peptidoglycan. This Mycolicibacterium paratuberculosis (strain ATCC BAA-968 / K-10) (Mycobacterium paratuberculosis) protein is Diaminopimelate epimerase.